Reading from the N-terminus, the 753-residue chain is 5-methyltetrahydropteroyltriglutamate--homocysteine methyltransferase (753 aa).

5-methyltetrahydropteroyltri-L-glutamate contacts are provided by residues 17 to 20 (RELK) and K117. L-homocysteine is bound by residues 431–433 (IGS) and E484. L-methionine contacts are provided by residues 431–433 (IGS) and E484. Residues 515-516 (RC) and W561 each bind 5-methyltetrahydropteroyltri-L-glutamate. D599 is an L-homocysteine binding site. L-methionine is bound at residue D599. Position 605 (E605) interacts with 5-methyltetrahydropteroyltri-L-glutamate. Positions 641, 643, and 665 each coordinate Zn(2+). H694 serves as the catalytic Proton donor. C726 is a Zn(2+) binding site.

Belongs to the vitamin-B12 independent methionine synthase family. The cofactor is Zn(2+).

The catalysed reaction is 5-methyltetrahydropteroyltri-L-glutamate + L-homocysteine = tetrahydropteroyltri-L-glutamate + L-methionine. It participates in amino-acid biosynthesis; L-methionine biosynthesis via de novo pathway; L-methionine from L-homocysteine (MetE route): step 1/1. Catalyzes the transfer of a methyl group from 5-methyltetrahydrofolate to homocysteine resulting in methionine formation. The protein is 5-methyltetrahydropteroyltriglutamate--homocysteine methyltransferase of Citrobacter koseri (strain ATCC BAA-895 / CDC 4225-83 / SGSC4696).